A 212-amino-acid polypeptide reads, in one-letter code: Large ribosomal subunit protein bL25 (212 aa).

A disordered region spans residues 1–25; it reads MSQSTIHKIAVKKRTETGKNENNRL. Residues 13-24 show a composition bias toward basic and acidic residues; sequence KRTETGKNENNR.

The protein belongs to the bacterial ribosomal protein bL25 family. CTC subfamily. In terms of assembly, part of the 50S ribosomal subunit; part of the 5S rRNA/L5/L18/L25 subcomplex. Contacts the 5S rRNA. Binds to the 5S rRNA independently of L5 and L18.

Functionally, this is one of the proteins that binds to the 5S RNA in the ribosome where it forms part of the central protuberance. The chain is Large ribosomal subunit protein bL25 from Leptospira borgpetersenii serovar Hardjo-bovis (strain L550).